Here is a 370-residue protein sequence, read N- to C-terminus: Lipoyl synthase, mitochondrial (370 aa).

The [4Fe-4S] cluster site is built by Cys104, Cys109, Cys115, Cys135, Cys139, Cys142, and Ser350. Residues 118-339 enclose the Radical SAM core domain; it reads GGDKSKATAT…KQKALELGFL (222 aa).

This sequence belongs to the radical SAM superfamily. Lipoyl synthase family. [4Fe-4S] cluster serves as cofactor.

It is found in the mitochondrion. The catalysed reaction is [[Fe-S] cluster scaffold protein carrying a second [4Fe-4S](2+) cluster] + N(6)-octanoyl-L-lysyl-[protein] + 2 oxidized [2Fe-2S]-[ferredoxin] + 2 S-adenosyl-L-methionine + 4 H(+) = [[Fe-S] cluster scaffold protein] + N(6)-[(R)-dihydrolipoyl]-L-lysyl-[protein] + 4 Fe(3+) + 2 hydrogen sulfide + 2 5'-deoxyadenosine + 2 L-methionine + 2 reduced [2Fe-2S]-[ferredoxin]. It participates in protein modification; protein lipoylation via endogenous pathway; protein N(6)-(lipoyl)lysine from octanoyl-[acyl-carrier-protein]: step 2/2. Catalyzes the radical-mediated insertion of two sulfur atoms into the C-6 and C-8 positions of the octanoyl moiety bound to the lipoyl domains of lipoate-dependent enzymes, thereby converting the octanoylated domains into lipoylated derivatives. The polypeptide is Lipoyl synthase, mitochondrial (Kluyveromyces lactis (strain ATCC 8585 / CBS 2359 / DSM 70799 / NBRC 1267 / NRRL Y-1140 / WM37) (Yeast)).